Reading from the N-terminus, the 215-residue chain is Fibroblast growth factor 17 (215 aa).

The signal sequence occupies residues 1–22 (MYGINQRYLYISFHFFVVWCHA). Residue N137 is glycosylated (N-linked (GlcNAc...) asparagine).

The protein belongs to the heparin-binding growth factors family.

It is found in the secreted. Its function is as follows. Involved in dorsal-ventral embryonic patterning, by promoting expression of bone morphogenetic protein (BMP) antagonists such as chd. Also involved in anterior-posterior neural patterning and in mesoderm induction. The chain is Fibroblast growth factor 17 (fgf17) from Danio rerio (Zebrafish).